The sequence spans 193 residues: Imidazoleglycerol-phosphate dehydratase (193 aa).

The protein belongs to the imidazoleglycerol-phosphate dehydratase family.

Its subcellular location is the cytoplasm. The catalysed reaction is D-erythro-1-(imidazol-4-yl)glycerol 3-phosphate = 3-(imidazol-4-yl)-2-oxopropyl phosphate + H2O. It functions in the pathway amino-acid biosynthesis; L-histidine biosynthesis; L-histidine from 5-phospho-alpha-D-ribose 1-diphosphate: step 6/9. The sequence is that of Imidazoleglycerol-phosphate dehydratase from Metallosphaera sedula (strain ATCC 51363 / DSM 5348 / JCM 9185 / NBRC 15509 / TH2).